The chain runs to 439 residues: Proton pump-interactor 4 (439 aa).

The stretch at 286–354 (KEEKEIDEET…AKKKKAVCKS (69 aa)) forms a coiled coil. The helical transmembrane segment at 415–435 (LWVWTVSSAAVALPLALLVVF) threads the bilayer.

It belongs to the plant Proton pump-interactor protein family.

Its subcellular location is the cell membrane. It localises to the endoplasmic reticulum membrane. May regulate plasma membrane ATPase activity. The sequence is that of Proton pump-interactor 4 (PPI4) from Arabidopsis thaliana (Mouse-ear cress).